The sequence spans 146 residues: Acidic phospholipase A2 S14-72F (146 aa).

Positions 1 to 19 (MYPAHLLVLLAVCVSLLGA) are cleaved as a signal peptide. Positions 20–27 (ASIPPQPL) are excised as a propeptide. Intrachain disulfides connect cysteine 38-cysteine 98, cysteine 54-cysteine 145, cysteine 56-cysteine 72, cysteine 71-cysteine 126, cysteine 78-cysteine 119, cysteine 87-cysteine 112, and cysteine 105-cysteine 117. Ca(2+) is bound by residues tyrosine 55, glycine 57, and glycine 59. Histidine 75 is a catalytic residue. Aspartate 76 is a Ca(2+) binding site. Residue aspartate 120 is part of the active site.

Belongs to the phospholipase A2 family. Group I subfamily. D49 sub-subfamily. Requires Ca(2+) as cofactor. In terms of tissue distribution, expressed by the venom gland.

Its subcellular location is the secreted. It carries out the reaction a 1,2-diacyl-sn-glycero-3-phosphocholine + H2O = a 1-acyl-sn-glycero-3-phosphocholine + a fatty acid + H(+). Functionally, snake venom phospholipase A2 (PLA2) that inhibits collagen-induced platelet aggregation. PLA2 catalyzes the calcium-dependent hydrolysis of the 2-acyl groups in 3-sn-phosphoglycerides. In Austrelaps superbus (Lowland copperhead snake), this protein is Acidic phospholipase A2 S14-72F.